A 518-amino-acid polypeptide reads, in one-letter code: Histone deacetylase 1 (518 aa).

A histone deacetylase region spans residues 22 to 333 (RRVCYFYDAE…WCYETGVALG (312 aa)). H153 (proton donor/acceptor) is an active-site residue. 3 residues coordinate Zn(2+): D188, H190, and D276. Residues 387-518 (HAPSVQFQER…QDQPSVHQKT (132 aa)) are disordered. Acidic residues predominate over residues 401–412 (ELPEQDEDQEDP). Residues 413–435 (DERHHADSDVEMDDVKPLDDSGR) show a composition bias toward basic and acidic residues. Residues 503–518 (DNSNKLQDQPSVHQKT) show a composition bias toward polar residues.

This sequence belongs to the histone deacetylase family. HD Type 1 subfamily. As to quaternary structure, interacts with TPR3. Zn(2+) is required as a cofactor. In terms of tissue distribution, expressed in roots and leaves.

It localises to the nucleus. It catalyses the reaction N(6)-acetyl-L-lysyl-[histone] + H2O = L-lysyl-[histone] + acetate. In terms of biological role, responsible for the deacetylation of lysine residues on the N-terminal part of the core histones (H2A, H2B, H3 and H4). Histone deacetylation gives a tag for epigenetic repression and plays an important role in transcriptional regulation, cell cycle progression and developmental events. Histone deacetylases act via the formation of large multiprotein complexes. Negatively regulates the expression of the NAC48/NAC6 gene that controls root growth in seedlings. Epigenetically represses the expression of NAC48/NAC6 by deacetylating 'Lys-9' (H3K9ac), 'Lys-14' (H3K14ac) and 'Lys-18' (H3K18ac) of histone H3, and 'Lys-5' (H4K5ac), 'Lys-12' (H4K12ac) and 'Lys-16' (H4K16ac) of histone H4. Functions in the regulation of gene expression in the whole genome. Acts as a chromatin remodeling regulator to promote the formation of a repressive chromatin state. Functions with MODD via its interaction with TPR3, to down-regulates the histone acetylation level at BZIP46 target genes. BZIP46 is a positive regulator of abscisic acid (ABA) signaling and drought stress tolerance. In Oryza sativa subsp. japonica (Rice), this protein is Histone deacetylase 1.